The chain runs to 739 residues: Exocyst complex component 3-like protein (739 aa).

Disordered stretches follow at residues 1–21 and 698–718; these read MDSKIQPTLRPGSSCPRPEWP and AALSSLQAGPPPSPSTGRRAL. The tract at residues 1 to 370 is mediates interaction with EXOC2, EXOC4 and EXOC5; the sequence is MDSKIQPTLR…DVSQLEPLLT (370 aa).

This sequence belongs to the SEC6 family. As to quaternary structure, interacts with EXOC2, EXOC4 and EXOC5; may be part of the exocyst. As to expression, ubiquitously expressed.

The protein resides in the cytoplasmic vesicle. It is found in the secretory vesicle. As part of the exocyst, may play a role in regulated exocytosis of insulin granules. This Mus musculus (Mouse) protein is Exocyst complex component 3-like protein (Exoc3l1).